Consider the following 98-residue polypeptide: C-X-C motif chemokine 10 (98 aa).

A signal peptide spans 1-21; sequence MNQTAILICCLVFLTLSGIQG. Arg26 is subject to Citrulline. Cystine bridges form between Cys30/Cys57 and Cys32/Cys74.

Belongs to the intercrine alpha (chemokine CxC) family.

The protein localises to the secreted. Functionally, chemotactic for monocytes and T-lymphocytes. Binds to CXCR3. This is C-X-C motif chemokine 10 (CXCL10) from Macaca mulatta (Rhesus macaque).